Reading from the N-terminus, the 230-residue chain is Flagellar L-ring protein (230 aa).

Positions Met-1–Thr-15 are cleaved as a signal peptide. Residue Cys-16 is the site of N-palmitoyl cysteine attachment. Cys-16 carries the S-diacylglycerol cysteine lipid modification.

The protein belongs to the FlgH family. The basal body constitutes a major portion of the flagellar organelle and consists of four rings (L,P,S, and M) mounted on a central rod.

It localises to the cell outer membrane. The protein resides in the bacterial flagellum basal body. Assembles around the rod to form the L-ring and probably protects the motor/basal body from shearing forces during rotation. The chain is Flagellar L-ring protein from Xanthomonas oryzae pv. oryzae (strain MAFF 311018).